Here is a 248-residue protein sequence, read N- to C-terminus: Molybdate/tungstate transport system permease protein WtpB (248 aa).

Topologically, residues 1–9 (MGGRDYTLY) are cytoplasmic. The chain crosses the membrane as a helical span at residues 10–30 (LFAALGSFLIVYIALPIIVIF). At 31–56 (TKQALDFRMLVKTIHDPLVIEALRNS) the chain is on the extracellular side. Residues 53 to 239 (LRNSLLTATA…GISLGIFVVL (187 aa)) form the ABC transmembrane type-1 domain. A helical transmembrane segment spans residues 57 to 77 (LLTATATALISLLFGVPLGYV). Over 78-91 (LARKDFRGKSLVQA) the chain is Cytoplasmic. The chain crosses the membrane as a helical span at residues 92–112 (IIDVPIVIPHSVVGIMLLVTF). At 113–115 (SNA) the chain is on the extracellular side. A helical transmembrane segment spans residues 116 to 136 (ILDSYKGIIAAMLFVSAPFAI). The Cytoplasmic portion of the chain corresponds to 137–164 (NSARDGFLAVDEKLEHVARTLGASKLRT). The chain crosses the membrane as a helical span at residues 165 to 185 (FFSISLPIALPSIASGAIMAW). At 186 to 223 (ARGISEVGAILIVAYYPKTAQVLVMEYFNNYGLRASRP) the chain is on the extracellular side. Residues 224-244 (ISVILMGISLGIFVVLRWLIG) form a helical membrane-spanning segment. The Cytoplasmic segment spans residues 245-248 (KAKS).

The protein belongs to the binding-protein-dependent transport system permease family. The complex is composed of two ATP-binding proteins (WtpC), two transmembrane proteins (WtpB) and a solute-binding protein (WtpA).

Its subcellular location is the cell membrane. In terms of biological role, part of the ABC transporter complex WtpABC involved in molybdate/tungstate import. Probably responsible for the translocation of the substrate across the membrane. The polypeptide is Molybdate/tungstate transport system permease protein WtpB (wtpB) (Pyrococcus abyssi (strain GE5 / Orsay)).